The primary structure comprises 605 residues: Poly [ADP-ribose] polymerase 2-B (605 aa).

Positions 96-122 (NAAAAAAVTDGGDQDKTKSAKDDDGDD) are disordered. A compositionally biased stretch (basic and acidic residues) spans 108–122 (DQDKTKSAKDDDGDD). The region spanning 153–260 (AYHVLQVGDE…TKLETRTASF (108 aa)) is the WGR domain. The PARP alpha-helical domain maps to 250–370 (ETKLETRTAS…EIEIAIKLLE (121 aa)). In terms of domain architecture, PARP catalytic spans 378–605 (HPLYARYKQF…NVNFNFKRWG (228 aa)).

The protein belongs to the ARTD/PARP family.

It localises to the nucleus. The enzyme catalyses NAD(+) + (ADP-D-ribosyl)n-acceptor = nicotinamide + (ADP-D-ribosyl)n+1-acceptor + H(+).. It catalyses the reaction L-aspartyl-[protein] + NAD(+) = 4-O-(ADP-D-ribosyl)-L-aspartyl-[protein] + nicotinamide. It carries out the reaction L-glutamyl-[protein] + NAD(+) = 5-O-(ADP-D-ribosyl)-L-glutamyl-[protein] + nicotinamide. In terms of biological role, involved in the base excision repair (BER) pathway, by catalyzing the poly(ADP-ribosyl)ation of a limited number of acceptor proteins involved in chromatin architecture and in DNA metabolism. This modification follows DNA damages and appears as an obligatory step in a detection/signaling pathway leading to the reparation of DNA strand breaks. This chain is Poly [ADP-ribose] polymerase 2-B (PARP2-B), found in Oryza sativa subsp. japonica (Rice).